Here is a 212-residue protein sequence, read N- to C-terminus: Ribosomal RNA small subunit methyltransferase G (212 aa).

S-adenosyl-L-methionine-binding positions include Gly72, Leu77, Val123 to Glu124, and Arg138.

This sequence belongs to the methyltransferase superfamily. RNA methyltransferase RsmG family.

It is found in the cytoplasm. It carries out the reaction guanosine(527) in 16S rRNA + S-adenosyl-L-methionine = N(7)-methylguanosine(527) in 16S rRNA + S-adenosyl-L-homocysteine. Specifically methylates the N7 position of guanine in position 527 of 16S rRNA. The polypeptide is Ribosomal RNA small subunit methyltransferase G (Histophilus somni (strain 129Pt) (Haemophilus somnus)).